Reading from the N-terminus, the 148-residue chain is HTH-type transcriptional regulator BilQ (148 aa).

An HTH marR-type domain is found at 1-140; that stretch reads MDFKNLQYES…LVKNLHVVKD (140 aa). The H-T-H motif DNA-binding region spans 54 to 77; it reads LNDVSTEFEVDKAHTTRTISRLEQ.

Transcription regulator that regulates expression of the bilirubin reductase operon (bilQ, bilR and bilS). This is HTH-type transcriptional regulator BilQ from Clostridioides difficile (strain CD3).